Here is a 455-residue protein sequence, read N- to C-terminus: SUN domain-containing protein 2 (455 aa).

Residues 1-12 (MSASTVSITASP) show a composition bias toward polar residues. A disordered region spans residues 1-99 (MSASTVSITA…RTRKSQGNKI (99 aa)). Position 2 is an N-acetylserine (Ser2). At 2–105 (SASTVSITAS…GNKIDRGKWK (104 aa)) the chain is on the nuclear side. At Ser63 the chain carries Phosphoserine. A compositionally biased stretch (low complexity) spans 74–88 (KSGSTATGTNTTTTQ). The Nuclear localization signal motif lies at 88–95 (QRRTRKSQ). The chain crosses the membrane as a helical span at residues 106-128 (TVVRVFAKQFGALLLLVGLIQLI). Over 129 to 455 (RKLTLKDSSL…ELDSVSVAHA (327 aa)) the chain is Perinuclear space. Positions 201 to 225 (LHSELKKVESKTERLQVSVDELNAK) form a coiled coil. The SUN domain occupies 285–447 (GGAFVMGHSD…YRFRVHGREL (163 aa)).

As to quaternary structure, forms homomers (e.g. dimers, trimers and tetramers) and heteromers with SUN1. Interacts with SUN3, SUN4 and TIK. Core component of the LINC complex which is composed of inner nuclear membrane SUN domain-containing proteins coupled to outer nuclear membrane WIP and WIT proteins. The LINC complex also involves nucleoskeletal proteins CRWN/LINC and possibly KAKU4 and the cytoskeletal myosin KAKU1. Interacts with LINC1, WIP1, WIP2 and WIP3 at the nuclear envelope (NE). Interacts with SINE1, SINE2, SINE3 and SINE4. Interacts with NEAP1, NEA2 and NEAP3. As to expression, expressed in roots, hypocotyls, cotyledons and leaves and inflorescences.

The protein localises to the nucleus inner membrane. Its subcellular location is the cytoplasm. It localises to the cytoskeleton. The protein resides in the phragmoplast. It is found in the endoplasmic reticulum membrane. The protein localises to the nucleus envelope. Functionally, component of SUN-protein-containing multivariate complexes also called LINC complexes which link the nucleoskeleton and cytoskeleton by providing versatile outer nuclear membrane attachment sites for cytoskeletal filaments. Required for the maintenance and/or formation of polarized nuclear shape in root hairs. Modulates the anchoring and mobility of WIP proteins in the nuclear envelope (NE). In association with SUN1, may be involved in telomere attachment to nuclear envelope in the prophase of meiosis. As component of the SUN-WIP-WIT2-KAKU1 complex, mediates the transfer of cytoplasmic forces to the nuclear envelope (NE), leading to nuclear shape changes. This Arabidopsis thaliana (Mouse-ear cress) protein is SUN domain-containing protein 2.